Consider the following 297-residue polypeptide: Bifunctional protein FolD (297 aa).

NADP(+) contacts are provided by residues Gly164–Ser166, Ser193, and Ile234.

It belongs to the tetrahydrofolate dehydrogenase/cyclohydrolase family. In terms of assembly, homodimer.

It catalyses the reaction (6R)-5,10-methylene-5,6,7,8-tetrahydrofolate + NADP(+) = (6R)-5,10-methenyltetrahydrofolate + NADPH. The catalysed reaction is (6R)-5,10-methenyltetrahydrofolate + H2O = (6R)-10-formyltetrahydrofolate + H(+). It functions in the pathway one-carbon metabolism; tetrahydrofolate interconversion. Its function is as follows. Catalyzes the oxidation of 5,10-methylenetetrahydrofolate to 5,10-methenyltetrahydrofolate and then the hydrolysis of 5,10-methenyltetrahydrofolate to 10-formyltetrahydrofolate. In Halobacterium salinarum (strain ATCC 700922 / JCM 11081 / NRC-1) (Halobacterium halobium), this protein is Bifunctional protein FolD.